Here is a 414-residue protein sequence, read N- to C-terminus: ORC1-type DNA replication protein 1 (414 aa).

ATP is bound by residues 70-74 (TGKTA), tyrosine 213, and arginine 225.

It belongs to the CDC6/cdc18 family.

In terms of biological role, involved in regulation of DNA replication. This Methanosarcina mazei (strain ATCC BAA-159 / DSM 3647 / Goe1 / Go1 / JCM 11833 / OCM 88) (Methanosarcina frisia) protein is ORC1-type DNA replication protein 1 (cdc6-1).